A 432-amino-acid polypeptide reads, in one-letter code: Trigger factor (432 aa).

Positions 161 to 246 (EDRVTIDFTG…LKKVEERELP (86 aa)) constitute a PPIase FKBP-type domain.

The protein belongs to the FKBP-type PPIase family. Tig subfamily.

It is found in the cytoplasm. It carries out the reaction [protein]-peptidylproline (omega=180) = [protein]-peptidylproline (omega=0). Involved in protein export. Acts as a chaperone by maintaining the newly synthesized protein in an open conformation. Functions as a peptidyl-prolyl cis-trans isomerase. This chain is Trigger factor, found in Klebsiella pneumoniae (strain 342).